We begin with the raw amino-acid sequence, 308 residues long: uncharacterized protein (308 aa).

Transmembrane regions (helical) follow at residues 45–65, 69–89, 100–120, 122–142, 151–171, 172–192, 201–221, 226–246, 263–283, and 285–305; these read LGLA…KIAL, SPFA…LPFL, IGIA…YTTA, NAGF…WLVY, VSGV…SGFN, IGDI…AMIS, TMLA…FAVF, FEIN…ATFV, AAVI…AVLA, and ILTP…IIVS. EamA domains follow at residues 52–166 and 178–306; these read LIWG…FLSG and LFCA…IVSL.

Belongs to the EamA transporter family.

The protein resides in the cell membrane. This is an uncharacterized protein from Archaeoglobus fulgidus (strain ATCC 49558 / DSM 4304 / JCM 9628 / NBRC 100126 / VC-16).